Reading from the N-terminus, the 693-residue chain is E3 ubiquitin-protein ligase MARCHF7 (693 aa).

Met-1 is modified (N-acetylmethionine). Disordered regions lie at residues 1–43 (MESK…RDSS), 69–136 (ESEI…LGSF), 158–281 (LMDY…RRTT), 296–342 (FFSR…EGRA), 361–430 (LSQN…RDSN), 445–475 (AANRPQASGASSSAAAGGSTPELPQGGRNPG), and 512–533 (WNSTDGKNDKAKSAPSRDPEKL). Polar residues-rich tracts occupy residues 14–36 (VQPSGSLSTRMVSGNRGTSLNDS), 95–105 (SCTNCASTSAG), 112–132 (LNTVSDSSWRHSQVPRSSSMV), 167–184 (DFTTSSYVQERVPSSYSQ), and 192–215 (AVSTLQLNSSSTNHQLPSDHQTVP). Residues 216-234 (SSRDSSRSSFRSHFSPRQS) show a composition bias toward low complexity. Residues 236 to 267 (SFRNSSHPAFSYFSSRNETPTISNSERGSSQR) show a composition bias toward polar residues. A compositionally biased stretch (basic and acidic residues) spans 268–279 (PYRESSDNEGRR). Residues 296–305 (FFSRRSSQDS) are compositionally biased toward low complexity. Over residues 306 to 323 (LNTRSLSSENYISPRTLT) the composition is skewed to polar residues. Phosphoserine is present on Ser-318. Residues 324–337 (SQSRNNGTSSSSDV) are compositionally biased toward low complexity. Ser-390 is subject to Phosphoserine. The segment covering 451-463 (ASGASSSAAAGGS) has biased composition (low complexity). Residues 517-533 (GKNDKAKSAPSRDPEKL) are compositionally biased toward basic and acidic residues. Residues 546 to 616 (DDEEEGDLCR…ELCKEKLQLN (71 aa)) form an RING-CH-type zinc finger. Cys-554, Cys-557, Cys-572, Cys-574, His-582, Cys-585, Cys-606, and Cys-609 together coordinate Zn(2+). At Thr-688 the chain carries Phosphothreonine. Phosphoserine is present on Ser-689.

As to expression, expressed in brain, thymus, muscle and kidney.

The protein resides in the cytoplasm. The catalysed reaction is S-ubiquitinyl-[E2 ubiquitin-conjugating enzyme]-L-cysteine + [acceptor protein]-L-lysine = [E2 ubiquitin-conjugating enzyme]-L-cysteine + N(6)-ubiquitinyl-[acceptor protein]-L-lysine.. The protein operates within protein modification; protein ubiquitination. In terms of biological role, E3 ubiquitin-protein ligase which may specifically enhance the E2 activity of HIP2. E3 ubiquitin ligases accept ubiquitin from an E2 ubiquitin-conjugating enzyme in the form of a thioester and then directly transfer the ubiquitin to targeted substrates. May be involved in T-cell proliferation by regulating LIF secretion. May play a role in lysosome homeostasis. Promotes 'Lys-6', 'Lys-11' and 'Lys-63'-linked mixed polyubiquitination on ATG14 leading to the inhibition of autophagy by impairing the interaction between ATG14 and STX7. Participates in the dopamine-mediated negative regulation of the NLRP3 inflammasome by promoting its uibiquitination and subsequent degradation. The protein is E3 ubiquitin-protein ligase MARCHF7 (Marchf7) of Mus musculus (Mouse).